The sequence spans 381 residues: 4-hydroxyphenylpyruvate dioxygenase (381 aa).

VOC domains are found at residues 22 to 156 and 184 to 338; these read GMDA…LVDR and AIDH…IFTK. Fe cation-binding residues include His187, His270, and Glu349.

This sequence belongs to the 4HPPD family. In terms of assembly, homodimer. It depends on Fe cation as a cofactor.

It carries out the reaction 3-(4-hydroxyphenyl)pyruvate + O2 = homogentisate + CO2. It participates in amino-acid degradation; L-phenylalanine degradation; acetoacetate and fumarate from L-phenylalanine: step 3/6. This chain is 4-hydroxyphenylpyruvate dioxygenase (hpd), found in Streptomyces avermitilis (strain ATCC 31267 / DSM 46492 / JCM 5070 / NBRC 14893 / NCIMB 12804 / NRRL 8165 / MA-4680).